A 149-amino-acid chain; its full sequence is Calmodulin (149 aa).

Ala2 carries the post-translational modification N-acetylalanine. EF-hand domains lie at 8-43 (EQIA…LGQN), 44-79 (PTEA…KMKD), 81-116 (DSEE…LGEK), and 117-149 (LTDE…MTAK). Ca(2+) contacts are provided by Asp21, Asp23, Asp25, Thr27, Glu32, Asp57, Asp59, Asn61, Thr63, Glu68, Asp94, Asp96, Asn98, Tyr100, and Glu105. The residue at position 116 (Lys116) is an N6,N6,N6-trimethyllysine. Ca(2+) is bound by residues Asp130, Asp132, Asp134, Gln136, and Glu141.

Belongs to the calmodulin family.

In terms of biological role, calmodulin acts as part of a calcium signal transduction pathway by mediating the control of a large number of enzymes, ion channels, aquaporins and other proteins through calcium-binding. Calcium-binding is required for the activation of calmodulin. Among the enzymes to be stimulated by the calmodulin-calcium complex are a number of protein kinases, such as myosin light-chain kinases and calmodulin-dependent protein kinase type II (CaMK2), and phosphatases. In Oreochromis mossambicus (Mozambique tilapia), this protein is Calmodulin (calm).